The following is a 422-amino-acid chain: 3-phosphoshikimate 1-carboxyvinyltransferase (422 aa).

Residues lysine 20, serine 21, and arginine 25 each coordinate 3-phosphoshikimate. Lysine 20 contributes to the phosphoenolpyruvate binding site. The phosphoenolpyruvate site is built by glycine 90 and arginine 118. 3-phosphoshikimate contacts are provided by serine 163, serine 164, glutamine 165, serine 191, aspartate 306, and lysine 333. A phosphoenolpyruvate-binding site is contributed by glutamine 165. The active-site Proton acceptor is the aspartate 306. Phosphoenolpyruvate contacts are provided by arginine 337 and arginine 378.

This sequence belongs to the EPSP synthase family. In terms of assembly, monomer.

The protein resides in the cytoplasm. The enzyme catalyses 3-phosphoshikimate + phosphoenolpyruvate = 5-O-(1-carboxyvinyl)-3-phosphoshikimate + phosphate. It functions in the pathway metabolic intermediate biosynthesis; chorismate biosynthesis. Its function is as follows. Catalyzes the transfer of the enolpyruvyl moiety of phosphoenolpyruvate (PEP) to the 5-hydroxyl of shikimate-3-phosphate (S3P) to produce enolpyruvyl shikimate-3-phosphate and inorganic phosphate. In Methanocella arvoryzae (strain DSM 22066 / NBRC 105507 / MRE50), this protein is 3-phosphoshikimate 1-carboxyvinyltransferase.